The chain runs to 205 residues: Recombination protein RecR (205 aa).

The C4-type zinc finger occupies 59–74 (CARCNTFCEGGLCDIC). One can recognise a Toprim domain in the interval 82–177 (RRLMVVHMPA…KVSRLSQGIP (96 aa)).

Belongs to the RecR family.

Its function is as follows. May play a role in DNA repair. It seems to be involved in an RecBC-independent recombinational process of DNA repair. It may act with RecF and RecO. In Neisseria meningitidis serogroup A / serotype 4A (strain DSM 15465 / Z2491), this protein is Recombination protein RecR.